Here is a 294-residue protein sequence, read N- to C-terminus: Ribosomal RNA small subunit methyltransferase A (294 aa).

Residues asparagine 29, valine 31, glycine 56, glutamate 77, aspartate 107, and asparagine 126 each contribute to the S-adenosyl-L-methionine site.

It belongs to the class I-like SAM-binding methyltransferase superfamily. rRNA adenine N(6)-methyltransferase family. RsmA subfamily.

Its subcellular location is the cytoplasm. The catalysed reaction is adenosine(1518)/adenosine(1519) in 16S rRNA + 4 S-adenosyl-L-methionine = N(6)-dimethyladenosine(1518)/N(6)-dimethyladenosine(1519) in 16S rRNA + 4 S-adenosyl-L-homocysteine + 4 H(+). In terms of biological role, specifically dimethylates two adjacent adenosines (A1518 and A1519) in the loop of a conserved hairpin near the 3'-end of 16S rRNA in the 30S particle. May play a critical role in biogenesis of 30S subunits. The protein is Ribosomal RNA small subunit methyltransferase A of Mycobacterium sp. (strain MCS).